Here is a 354-residue protein sequence, read N- to C-terminus: Alkanal monooxygenase alpha chain (354 aa).

Belongs to the bacterial luciferase oxidoreductase family. As to quaternary structure, heterodimer of an alpha and a beta chain.

The enzyme catalyses a long-chain fatty aldehyde + FMNH2 + O2 = a long-chain fatty acid + hnu + FMN + H2O + 2 H(+). Functionally, light-emitting reaction in luminous bacteria. The protein is Alkanal monooxygenase alpha chain (luxA) of Photobacterium leiognathi.